Reading from the N-terminus, the 537-residue chain is 2-succinyl-5-enolpyruvyl-6-hydroxy-3-cyclohexene-1-carboxylate synthase (537 aa).

Belongs to the TPP enzyme family. MenD subfamily. As to quaternary structure, homodimer. Requires Mg(2+) as cofactor. It depends on Mn(2+) as a cofactor. Thiamine diphosphate is required as a cofactor.

The catalysed reaction is isochorismate + 2-oxoglutarate + H(+) = 5-enolpyruvoyl-6-hydroxy-2-succinyl-cyclohex-3-ene-1-carboxylate + CO2. It functions in the pathway quinol/quinone metabolism; 1,4-dihydroxy-2-naphthoate biosynthesis; 1,4-dihydroxy-2-naphthoate from chorismate: step 2/7. Its pathway is quinol/quinone metabolism; menaquinone biosynthesis. Functionally, catalyzes the thiamine diphosphate-dependent decarboxylation of 2-oxoglutarate and the subsequent addition of the resulting succinic semialdehyde-thiamine pyrophosphate anion to isochorismate to yield 2-succinyl-5-enolpyruvyl-6-hydroxy-3-cyclohexene-1-carboxylate (SEPHCHC). In Desulfotalea psychrophila (strain LSv54 / DSM 12343), this protein is 2-succinyl-5-enolpyruvyl-6-hydroxy-3-cyclohexene-1-carboxylate synthase.